Here is a 370-residue protein sequence, read N- to C-terminus: Homoserine kinase (370 aa).

Residues 1-34 constitute a chloroplast transit peptide; it reads MASLCFQSPSKPISYFQPKSNPSPPLFAKVSVFR. 143-154 contributes to the ATP binding site; that stretch reads LPLGSGLGSSAA.

Belongs to the GHMP kinase family. Homoserine kinase subfamily.

Its subcellular location is the plastid. It localises to the chloroplast stroma. The enzyme catalyses L-homoserine + ATP = O-phospho-L-homoserine + ADP + H(+). It functions in the pathway amino-acid biosynthesis; L-threonine biosynthesis; L-threonine from L-aspartate: step 4/5. In terms of biological role, catalyzes the ATP-dependent phosphorylation of L-homoserine to L-homoserine phosphate. Is specific for L-homoserine and cannot use other substrates such D-serine, L-serine, D-threonine and L-threonine, galactose or D-homoserine in vitro. Required for susceptibility to the downy mildew pathogen Hyaloperonospora parasitica. The protein is Homoserine kinase (HSK) of Arabidopsis thaliana (Mouse-ear cress).